The primary structure comprises 251 residues: tRNA (guanine-N(1)-)-methyltransferase (251 aa).

Residues Gly-113 and Ile-133–Leu-138 contribute to the S-adenosyl-L-methionine site.

This sequence belongs to the RNA methyltransferase TrmD family. In terms of assembly, homodimer.

Its subcellular location is the cytoplasm. It catalyses the reaction guanosine(37) in tRNA + S-adenosyl-L-methionine = N(1)-methylguanosine(37) in tRNA + S-adenosyl-L-homocysteine + H(+). Specifically methylates guanosine-37 in various tRNAs. In Methylococcus capsulatus (strain ATCC 33009 / NCIMB 11132 / Bath), this protein is tRNA (guanine-N(1)-)-methyltransferase.